The chain runs to 221 residues: Cytidylate kinase (221 aa).

11-19 (GPCGAGKST) contributes to the ATP binding site.

Belongs to the cytidylate kinase family. Type 1 subfamily.

Its subcellular location is the cytoplasm. It carries out the reaction CMP + ATP = CDP + ADP. The catalysed reaction is dCMP + ATP = dCDP + ADP. This is Cytidylate kinase from Mycoplasmopsis agalactiae (strain NCTC 10123 / CIP 59.7 / PG2) (Mycoplasma agalactiae).